We begin with the raw amino-acid sequence, 264 residues long: tRNA pseudouridine synthase A (264 aa).

The Nucleophile role is filled by Asp-51. Tyr-109 contributes to the substrate binding site.

This sequence belongs to the tRNA pseudouridine synthase TruA family. In terms of assembly, homodimer.

It carries out the reaction uridine(38/39/40) in tRNA = pseudouridine(38/39/40) in tRNA. In terms of biological role, formation of pseudouridine at positions 38, 39 and 40 in the anticodon stem and loop of transfer RNAs. The polypeptide is tRNA pseudouridine synthase A (Pseudoalteromonas translucida (strain TAC 125)).